The primary structure comprises 437 residues: Phosphoglucosamine mutase (437 aa).

The active-site Phosphoserine intermediate is the Ser-101. Residues Ser-101, Asp-234, Asp-236, and Asp-238 each contribute to the Mg(2+) site. At Ser-101 the chain carries Phosphoserine.

This sequence belongs to the phosphohexose mutase family. Mg(2+) is required as a cofactor. Post-translationally, activated by phosphorylation.

The enzyme catalyses alpha-D-glucosamine 1-phosphate = D-glucosamine 6-phosphate. Catalyzes the conversion of glucosamine-6-phosphate to glucosamine-1-phosphate. This chain is Phosphoglucosamine mutase, found in Thermus thermophilus (strain ATCC 27634 / DSM 579 / HB8).